The following is a 41-amino-acid chain: Trypsin inhibitor (41 aa).

3 disulfide bridges follow: Cys-15–Cys-26, Cys-17–Cys-24, and Cys-29–Cys-37.

Functionally, has two active sites that simultaneously bind and inhibit trypsin. The protein is Trypsin inhibitor of Trichosanthes kirilowii (Chinese snake gourd).